A 770-amino-acid polypeptide reads, in one-letter code: Transcription activator AMTR1 (770 aa).

The segment at residues 7–34 is a DNA-binding region (zn(2)-C6 fungal-type); that stretch reads CLTCRQRKLKCDEKKPVCRQCAKASREC.

Its subcellular location is the nucleus. Transcription factor that regulates the expression of the gene clusters that mediate the biosynthesis of AM-toxins, host-selective toxins (HSTs) causing Alternaria blotch on apple, a worldwide distributed disease. AM-toxins have two target sites for affecting susceptible apple cells; they cause invagination of the plasma membrane and electrolyte loss and chloroplast disorganization. The chain is Transcription activator AMTR1 from Alternaria alternata (Alternaria rot fungus).